A 401-amino-acid polypeptide reads, in one-letter code: MRNIIVEPLNQTPIEDQKVEIVERKGIGHPDSISDGIAESVSRALCNAYLDRFGAIMHHNTDEVQITAGESAPQFGGGEVIKPMEILLTGRGIAEVDGEKIGLDRIAISAAKEYLRENILNLDVETCAVVECKIGHGSGDLRDVFARKGRAPLSNDTSFGVGFAPFSETERIVMEAENLLNSPEFKKKHPAVGEDIKVMGLRENDNITLTVACAMVDRYVSDLEEYLEVKNVVRDEVFKIASKLTDRNLEVFVNTADRCEDDEPSVYITVTGTSAEMGDDGSVGRGNRANGLITPNRPMSMEATSGKNPINHVGKIYNLLSNQMAGDIVESVEGVKQVHIMILSQIGKPIDHPKAATAQVILEDGYTMDEVTGKVSGVMDAWLEDIPSITEMLVKGQLRTF.

Position 135-140 (135-140 (GHGSGD)) interacts with ATP.

This sequence belongs to the AdoMet synthase 2 family. It depends on Mg(2+) as a cofactor.

The enzyme catalyses L-methionine + ATP + H2O = S-adenosyl-L-methionine + phosphate + diphosphate. Its pathway is amino-acid biosynthesis; S-adenosyl-L-methionine biosynthesis; S-adenosyl-L-methionine from L-methionine: step 1/1. In terms of biological role, catalyzes the formation of S-adenosylmethionine from methionine and ATP. The sequence is that of S-adenosylmethionine synthase (mat) from Methanothermobacter thermautotrophicus (strain ATCC 29096 / DSM 1053 / JCM 10044 / NBRC 100330 / Delta H) (Methanobacterium thermoautotrophicum).